The chain runs to 167 residues: Phospholipase A and acyltransferase 1 (167 aa).

Topologically, residues 1 to 138 (MAVNDCFSLT…GEGVSEQANR (138 aa)) are cytoplasmic. The LRAT domain maps to 20 to 135 (LIEVFRPCYQ…LRYGEGVSEQ (116 aa)). His-30 is an active-site residue. Catalysis depends on Cys-119, which acts as the Acyl-thioester intermediate. The helical transmembrane segment at 139–159 (AIGTIGLVAAGIDIFTFLGLF) threads the bilayer. Residues 160-167 (PKRQRTKY) lie on the Lumenal side of the membrane.

This sequence belongs to the H-rev107 family. As to expression, expressed in skeletal muscle, heart, brain, bone marrow and testis. Abundantly expressed in brain, heart, and skeletal muscle.

It is found in the membrane. Its subcellular location is the cytoplasm. The protein resides in the nucleus. The catalysed reaction is a 1,2-diacyl-sn-glycero-3-phosphocholine + H2O = a 1-acyl-sn-glycero-3-phosphocholine + a fatty acid + H(+). It carries out the reaction a 1,2-diacyl-sn-glycero-3-phosphocholine + H2O = a 2-acyl-sn-glycero-3-phosphocholine + a fatty acid + H(+). The enzyme catalyses 1,2-dihexadecanoyl-sn-glycero-3-phosphocholine + H2O = 2-hexadecanoyl-sn-glycero-3-phosphocholine + hexadecanoate + H(+). It catalyses the reaction 1,2-dihexadecanoyl-sn-glycero-3-phosphocholine + H2O = 1-hexadecanoyl-sn-glycero-3-phosphocholine + hexadecanoate + H(+). The catalysed reaction is 1-hexadecanoyl-2-(5Z,8Z,11Z,14Z-eicosatetraenoyl)-sn-glycero-3-phosphoethanolamine + H2O = 2-(5Z,8Z,11Z,14Z)-eicosatetraenoyl-sn-glycero-3-phosphoethanolamine + hexadecanoate + H(+). It carries out the reaction 1-hexadecanoyl-2-(5Z,8Z,11Z,14Z-eicosatetraenoyl)-sn-glycero-3-phosphoethanolamine + H2O = 1-hexadecanoyl-sn-glycero-3-phosphoethanolamine + (5Z,8Z,11Z,14Z)-eicosatetraenoate + H(+). The enzyme catalyses 1,2-di-(9Z-octadecenoyl)-sn-glycero-3-phosphoethanolamine + 1,2-dihexadecanoyl-sn-glycero-3-phosphocholine = hexadecanoyl-sn-glycero-3-phosphocholine + N-hexadecanoyl-1,2-di-(9Z-octadecenoyl)-sn-glycero-3-phosphoethanolamine + H(+). It catalyses the reaction 1,2-dihexadecanoyl-sn-glycero-3-phosphocholine + a 2-acyl-sn-glycero-3-phosphocholine = a 1-hexadecanoyl-2-acyl-sn-glycero-3-phosphocholine + 2-hexadecanoyl-sn-glycero-3-phosphocholine. Functionally, exhibits both phospholipase A1/2 and acyltransferase activities. Shows phospholipase A1 (PLA1) and A2 (PLA2) activity, catalyzing the calcium-independent release of fatty acids from the sn-1 or sn-2 position of glycerophospholipids. Shows O-acyltransferase activity, catalyzing the transfer of a fatty acyl group from glycerophospholipid to the hydroxyl group of lysophospholipid. Shows N-acyltransferase activity, catalyzing the calcium-independent transfer of a fatty acyl group at the sn-1 position of phosphatidylcholine (PC) and other glycerophospholipids to the primary amine of phosphatidylethanolamine (PE), forming N-acylphosphatidylethanolamine (NAPE), which serves as precursor for N-acylethanolamines (NAEs). This is Phospholipase A and acyltransferase 1 from Mus musculus (Mouse).